The chain runs to 311 residues: Protoheme IX farnesyltransferase (311 aa).

A run of 9 helical transmembrane segments spans residues 33 to 53 (VVML…PSPA), 55 to 75 (LWLL…AAAV), 104 to 124 (NALL…SSFI), 127 to 147 (LTAW…TLFL), 155 to 175 (IVIG…AVTG), 181 to 201 (GLLL…ALAL), 228 to 248 (IVLY…TRMM), 252 to 272 (YLVG…KLLV), and 287 to 307 (IIYL…FPIP).

It belongs to the UbiA prenyltransferase family. Protoheme IX farnesyltransferase subfamily.

The protein resides in the cell inner membrane. The catalysed reaction is heme b + (2E,6E)-farnesyl diphosphate + H2O = Fe(II)-heme o + diphosphate. The protein operates within porphyrin-containing compound metabolism; heme O biosynthesis; heme O from protoheme: step 1/1. Functionally, converts heme B (protoheme IX) to heme O by substitution of the vinyl group on carbon 2 of heme B porphyrin ring with a hydroxyethyl farnesyl side group. This chain is Protoheme IX farnesyltransferase, found in Teredinibacter turnerae (strain ATCC 39867 / T7901).